A 202-amino-acid polypeptide reads, in one-letter code: LexA repressor (202 aa).

A DNA-binding region (H-T-H motif) is located at residues 28 to 48 (IAEIARAIGVSSPHGVREQLR). Catalysis depends on for autocatalytic cleavage activity residues S120 and K157.

Belongs to the peptidase S24 family. As to quaternary structure, homodimer.

The enzyme catalyses Hydrolysis of Ala-|-Gly bond in repressor LexA.. Its function is as follows. Represses a number of genes involved in the response to DNA damage (SOS response), including recA and lexA. In the presence of single-stranded DNA, RecA interacts with LexA causing an autocatalytic cleavage which disrupts the DNA-binding part of LexA, leading to derepression of the SOS regulon and eventually DNA repair. This Methylococcus capsulatus (strain ATCC 33009 / NCIMB 11132 / Bath) protein is LexA repressor.